The chain runs to 118 residues: MTGEYRMAKDIGLGVKPPRRECDDPNCPFHGNLRVRGMILEGVVVSDRMDKTVIVEREYYRYDRKYERWERRRSRIPAHNPPCIDAQEGDKVRIAECRPLSKTKSFVVIEVLERAQER.

It belongs to the universal ribosomal protein uS17 family. As to quaternary structure, part of the 30S ribosomal subunit.

One of the primary rRNA binding proteins, it binds specifically to the 5'-end of 16S ribosomal RNA. The sequence is that of Small ribosomal subunit protein uS17 from Methanopyrus kandleri (strain AV19 / DSM 6324 / JCM 9639 / NBRC 100938).